The following is a 640-amino-acid chain: MSARPDTPLLDTVSYPEDLRKLEPGQLRQLSDELRAEMISAVGVTGGHLGSGLGVVELTAAIHYVFNTPEDRLIWDVGHQCYPHKILTGRRDRIRTLRQGGGLSGFTKRSESEYDPFGAAHSSTSISAGLGFAVANKLKGEPGKAIAVIGDGAMSAGMAYEAMNNAEQAGNRLIVILNDNDMSIAPPVGGLSGYLARLMSSSEYLGLRSLASRMTAKVSRRVHTSLGKAEEYTKGLVTGGTLFEELGFYYVGPIDGHNLDHLIPVLENVRDAEEGPFLIHVRTVKGKGYAPAENSADKYHGVAKFDVVTGEQKKSTGGPPAYQNVFGETLAKLADSDPRICAITAAMPSGTGVDKFAKAHPDRAFDVGIAEQHGVTFAAGLAAQGMRPFAAIYSTFLQRAYDQVVHDVAIQNLPVRFAIDRAGLVGADGSTHAGSFDVTYLATLPNFVVMAAADEAELVHMTYTAAEHDSGPIAFRYPRGGGIGIDLPETPEKLEIGKGRIVKHGSKVALLSLGTRLEEAKRAADELEAKGLSTTIADMRFAKPLDTELIAQLMKNHEVVVTIEEASIGGLGAHVLTYASDEGLTDAGLKIRTMRLPDAFIEQDAPEKQYDEAGLTAPHIVDTVLKALRQNSAGVEEARA.

Residues His79 and 120–122 (AHS) contribute to the thiamine diphosphate site. A Mg(2+)-binding site is contributed by Asp151. Thiamine diphosphate contacts are provided by residues 152–153 (GA), Asn180, Tyr289, and Glu371. Asn180 lines the Mg(2+) pocket.

The protein belongs to the transketolase family. DXPS subfamily. Homodimer. Mg(2+) serves as cofactor. Requires thiamine diphosphate as cofactor.

The enzyme catalyses D-glyceraldehyde 3-phosphate + pyruvate + H(+) = 1-deoxy-D-xylulose 5-phosphate + CO2. It participates in metabolic intermediate biosynthesis; 1-deoxy-D-xylulose 5-phosphate biosynthesis; 1-deoxy-D-xylulose 5-phosphate from D-glyceraldehyde 3-phosphate and pyruvate: step 1/1. Its function is as follows. Catalyzes the acyloin condensation reaction between C atoms 2 and 3 of pyruvate and glyceraldehyde 3-phosphate to yield 1-deoxy-D-xylulose-5-phosphate (DXP). This is 1-deoxy-D-xylulose-5-phosphate synthase from Erythrobacter litoralis (strain HTCC2594).